The sequence spans 468 residues: MITERQTDSNAMWGGRFSEGPTAIMREINASIPFDKRLWQQDIAGSKAHLKMLVSRNIITAEDGQKILEGLDKIAAEYAEKGVPEDWSLEDIHMVTEKRLADLIGSAAGRLHTARSRNDQVATDFKLWVRDAIDMVDKGLTALQTALVIRAEEHAATVMPGFTHLQIAQPITLGHHLMAYYEMISRDRSRFSDGRKRLNQSPLGAAALAGTGFNIDRHQTAKALGFDAPTANSLDSVSDRDFALDYLMSATQTAIHLSRLAEEIIIWASQPYGFVSLPDAYSTGSSIMPQKRNPDAAELVRGHSGRIAGCMNALVMTMKGLPLAYSKDMQDDKPPVFEAHDLLSLAIAAMTGMIETLTFIPEKMRKTAEAGFSTATDLADWLVRQAGIPFREAHHITGSAVRLAETKGIALDALSIEDLKAIDPRIDESVKAVLSVDASVASRNSYGGTAPDQVRARILDAKKTLGLN.

Belongs to the lyase 1 family. Argininosuccinate lyase subfamily.

It localises to the cytoplasm. It catalyses the reaction 2-(N(omega)-L-arginino)succinate = fumarate + L-arginine. Its pathway is amino-acid biosynthesis; L-arginine biosynthesis; L-arginine from L-ornithine and carbamoyl phosphate: step 3/3. This chain is Argininosuccinate lyase, found in Zymomonas mobilis subsp. mobilis (strain ATCC 31821 / ZM4 / CP4).